Here is a 329-residue protein sequence, read N- to C-terminus: MHITYDLPVAIDDIIEAKQRLAGRIYKTGMPRSNYFSERCKGEIFLKFENMQRTGSFKIRGAFNKLSSLTDAEKRKGVVACSAGNHAQGVSLSCAMLGIDGKVVMPKGAPKSKVAATCDYSAEVVLHGDNFNDTIAKVSEIVEMEGRIFIPPYDDPKVIAGQGTIGLEIMEDLYDVDNVIVPIGGGGLIAGIAVAIKSINPTIRVIGVQSENVHGMAASFHSGEITTHRTTGTLADGCDVSRPGNLTYEIVRELVDDIVLVSEDEIRNSMIALIQRNKVVTEGAGALACAALLSGKLDQYIQNRKTVSIISGGNIDLSRVSQITGFVDA.

53 to 54 (RT) serves as a coordination point for AMP. Residue lysine 58 is modified to N6-(pyridoxal phosphate)lysine. Residues glutamine 88, 119–120 (DY), and asparagine 314 contribute to the AMP site.

The protein belongs to the serine/threonine dehydratase family. In the native structure, TdcB is in a dimeric form, whereas in the TdcB-AMP complex, it exists in a tetrameric form (dimer of dimers). The cofactor is pyridoxal 5'-phosphate.

It carries out the reaction L-threonine = 2-oxobutanoate + NH4(+). The catalysed reaction is L-serine = pyruvate + NH4(+). It functions in the pathway amino-acid degradation; L-threonine degradation via propanoate pathway; propanoate from L-threonine: step 1/4. Its activity is regulated as follows. Each protein molecule can bind up to four molecules of AMP, which act as an allosteric activator to the enzyme. In terms of biological role, catalyzes the anaerobic formation of alpha-ketobutyrate and ammonia from threonine in a two-step reaction. The first step involved a dehydration of threonine and a production of enamine intermediates (aminocrotonate), which tautomerizes to its imine form (iminobutyrate). Both intermediates are unstable and short-lived. The second step is the nonenzymatic hydrolysis of the enamine/imine intermediates to form 2-ketobutyrate and free ammonia. In the low water environment of the cell, the second step is accelerated by RidA. TdcB also dehydrates serine to yield pyruvate via analogous enamine/imine intermediates. In Escherichia coli O157:H7, this protein is L-threonine dehydratase catabolic TdcB (tdcB).